The sequence spans 217 residues: Probable transaldolase (217 aa).

Residue K83 is the Schiff-base intermediate with substrate of the active site.

Belongs to the transaldolase family. Type 3B subfamily.

Its subcellular location is the cytoplasm. It catalyses the reaction D-sedoheptulose 7-phosphate + D-glyceraldehyde 3-phosphate = D-erythrose 4-phosphate + beta-D-fructose 6-phosphate. The protein operates within carbohydrate degradation; pentose phosphate pathway; D-glyceraldehyde 3-phosphate and beta-D-fructose 6-phosphate from D-ribose 5-phosphate and D-xylulose 5-phosphate (non-oxidative stage): step 2/3. Functionally, transaldolase is important for the balance of metabolites in the pentose-phosphate pathway. The chain is Probable transaldolase from Ruegeria pomeroyi (strain ATCC 700808 / DSM 15171 / DSS-3) (Silicibacter pomeroyi).